A 380-amino-acid chain; its full sequence is Probable transposase for insertion sequence element IS701 (380 aa).

Involved in the transposition of the insertion sequence. The protein is Probable transposase for insertion sequence element IS701 of Microchaete diplosiphon (Fremyella diplosiphon).